We begin with the raw amino-acid sequence, 185 residues long: Guanosine deaminase (185 aa).

Positions 28–142 constitute a CMP/dCMP-type deaminase domain; sequence DSDHKFLTQA…AAIAIGFDDF (115 aa). H80 provides a ligand contact to Zn(2+). E82 serves as the catalytic Proton donor. The Zn(2+) site is built by C110 and C113.

It belongs to the cytidine and deoxycytidylate deaminase family. In terms of tissue distribution, expressed in roots, leaves, flowers and siliques.

Its subcellular location is the cytoplasm. The protein localises to the nucleus. It catalyses the reaction guanosine + H2O + H(+) = xanthosine + NH4(+). Catalyzes the hydrolytic deamination of guanosine, producing xanthosine and ammonia. Deaminates exclusively guanosine and 2'-deoxyguanosine but no other aminated purines, pyrimidines, or pterines. Deamination of guanosine by GSDA is the only source of xanthosine production in Arabidopsis. This is Guanosine deaminase from Arabidopsis thaliana (Mouse-ear cress).